The following is a 490-amino-acid chain: Transmembrane protein 185-like (490 aa).

The span at methionine 1 to asparagine 31 shows a compositional bias: low complexity. Disordered stretches follow at residues methionine 1–lysine 151 and asparagine 455–leucine 490. Positions threonine 47–lysine 59 are enriched in polar residues. Low complexity-rich tracts occupy residues serine 66–serine 80 and asparagine 89–asparagine 108. Over residues lysine 109 to isoleucine 125 the composition is skewed to polar residues. Residues glutamine 133 to asparagine 145 are compositionally biased toward gly residues. The span at serine 463–glutamate 472 shows a compositional bias: acidic residues.

It belongs to the TMEM185 family.

In Dictyostelium discoideum (Social amoeba), this protein is Transmembrane protein 185-like.